The following is a 167-amino-acid chain: uncharacterized protein (167 aa).

The segment at 115 to 167 (SYRSQPQLGFKSTPPAHSSVFHHSVKAPKEDQAQEAASRPLTSQDGWNPNIKK) is disordered.

This is an uncharacterized protein from Homo sapiens (Human).